We begin with the raw amino-acid sequence, 297 residues long: Formylmethanofuran--tetrahydromethanopterin formyltransferase (297 aa).

This sequence belongs to the FTR family. As to quaternary structure, homotetramer.

It is found in the cytoplasm. The enzyme catalyses N-formylmethanofuran + 5,6,7,8-tetrahydromethanopterin + H(+) = N(5)-formyl-5,6,7,8-tetrahydromethanopterin + methanofuran. The protein operates within one-carbon metabolism; methanogenesis from CO(2); 5,10-methenyl-5,6,7,8-tetrahydromethanopterin from CO(2): step 2/3. Catalyzes the reversible transfer of a formyl group from formylmethanofuran (formyl-MFR) to tetrahydromethanopterin (H(4)MPT) to produce 5-formyl tetrahydromethanopterin (5-formyl-H(4)MPT) and methanofuran (MFR). The sequence is that of Formylmethanofuran--tetrahydromethanopterin formyltransferase from Methanothermobacter thermautotrophicus (strain ATCC 29096 / DSM 1053 / JCM 10044 / NBRC 100330 / Delta H) (Methanobacterium thermoautotrophicum).